We begin with the raw amino-acid sequence, 201 residues long: Holliday junction branch migration complex subunit RuvA (201 aa).

Residues 1–64 form a domain I region; that stretch reads MYEYIRGQFQ…EDFIGLYGFT (64 aa). Residues 65-143 form a domain II region; the sequence is TREELEMFKL…PDELTSEEGQ (79 aa). The tract at residues 144–152 is flexible linker; sequence LIEGINDNS. Residues 153–201 are domain III; sequence DYSFNINETLSALMALGYTEKEAQKALEKVDKTLSIENMIKESLKLLMR.

This sequence belongs to the RuvA family. Homotetramer. Forms an RuvA(8)-RuvB(12)-Holliday junction (HJ) complex. HJ DNA is sandwiched between 2 RuvA tetramers; dsDNA enters through RuvA and exits via RuvB. An RuvB hexamer assembles on each DNA strand where it exits the tetramer. Each RuvB hexamer is contacted by two RuvA subunits (via domain III) on 2 adjacent RuvB subunits; this complex drives branch migration. In the full resolvosome a probable DNA-RuvA(4)-RuvB(12)-RuvC(2) complex forms which resolves the HJ.

The protein resides in the cytoplasm. Functionally, the RuvA-RuvB-RuvC complex processes Holliday junction (HJ) DNA during genetic recombination and DNA repair, while the RuvA-RuvB complex plays an important role in the rescue of blocked DNA replication forks via replication fork reversal (RFR). RuvA specifically binds to HJ cruciform DNA, conferring on it an open structure. The RuvB hexamer acts as an ATP-dependent pump, pulling dsDNA into and through the RuvAB complex. HJ branch migration allows RuvC to scan DNA until it finds its consensus sequence, where it cleaves and resolves the cruciform DNA. This is Holliday junction branch migration complex subunit RuvA from Clostridium perfringens (strain 13 / Type A).